The primary structure comprises 71 residues: Venom peptide 2-long (71 aa).

Residues 1-24 (MKQSIIIALFATIAVMACLQMVAA) form the signal peptide. AXPX repeat units lie at residues 24–27 (AVPA), 32–35 (AAPG), 44–47 (ASPE), 50–53 (ASPE), and 54–57 (AEPI). A propeptide spanning residues 25–54 (VPAPVPEAAPGPVAEAEAYASPEALASPEA) is cleaved from the precursor. Position 68 is a leucine amide (Leu-68).

It belongs to the MCD family. Protonectin subfamily. Expressed by the venom gland.

It is found in the secreted. The protein localises to the target cell membrane. In terms of biological role, antimicrobial peptide with strong activity against the fungus B.cinerea (MIC=0.5 ug/ml), and poor activities against the fungus C.albicans (MIC=100 ug/ml), the Gram-positive bacterium S.aureus (MIC=125 ug/ml) and the Gram-negative bacterium E.coli (MIC=125 ug/ml). Functionally, antimicrobial peptide with strong activity against the fungus B.cinerea (MIC=0.4 uM), and poor activities against the fungus C.albicans (MIC=16 uM), the Gram-positive bacterium S.aureus (MIC=20 uM) and the Gram-negative bacterium E.coli (MIC=79 uM). Shows cytolytic activity against insect cell lines. Has potent hemolytic activity against ovine erythrocytes. Has potent hemolytic activity against human erythrocytes (EC(50)=31 uM). In vivo, peptide injection in the vicinity of the head and thorax of lepidopteran larvae induces feeding disorder followed by death due to starvation. In Orancistrocerus drewseni (Solitary wasp), this protein is Venom peptide 2-long.